The chain runs to 249 residues: MPIFYESLSDNLRDWALRQPLFFVSSAPYRGRHINVSPKGLPDSSFAVLSPSKVAYVDSTGSGCETICHLRENGRATVMFCSFDATPRIMRLFCTGSVIEWNDPRYAGYVKRMGVKSLVGARAVIILDIFKVQISCGFGVPLLDLTVDPETNEPKPCFTNRPRLGKFAEYTINRGELPEYQMQWNSRSLDGLPGLHSAMRDKGEFIWWAHVTNWASYYHFQLDIIKTGMALMFLVMVVAQWVGYVLYQW.

21–24 (LFFV) is a binding site for substrate. FMN-binding positions include 76–81 (ATVMFC), 91–92 (RL), Arg105, and 163–164 (RL). 215-217 (ASY) contributes to the substrate binding site. Residues 227-247 (TGMALMFLVMVVAQWVGYVLY) traverse the membrane as a helical segment.

This sequence belongs to the pyridoxamine 5'-phosphate oxidase family. It depends on FMN as a cofactor.

It localises to the membrane. It participates in mycotoxin biosynthesis. Pyridoxamine 5'-phosphate oxidase family protein; part of the gene cluster that mediates the biosynthesis of the secondary metabolite ustiloxin B, an antimitotic tetrapeptide. First, ustA is processed by the subtilisin-like endoprotease Kex2 that is outside the ustiloxin B gene cluster, at the C-terminal side of Arg-Lys, after transfer to Golgi apparatus through the endoplasmic reticulum (ER). Cleavage by KEX2 generates 16 peptides YAIG-I to YAIG-XVI. To process the precursor peptide further, at least two peptidases are necessary to cleave the N-terminal and C-terminal sides of the Tyr-Ala-Ile-Gly core peptide which serves as backbone for the synthesis of ustiloxin B, through cyclization and modification of the tyrosine with a non-protein coding amino acid, norvaline. One of the two peptidases must be the serine peptidase ustP; and the other pepdidase is probably ustH. Macrocyclization of the core peptide derived from ustA requires the tyrosinase ustQ, as well as the homologous oxidases ustYa and ustYb, and leads to the production of the first cyclization product N-desmethylustiloxin F. For the formation of N-desmethylustiloxin F, three oxidation steps are required, hydroxylation at the benzylic position, hydroxylation at either the aromatic ring of Tyr or beta-position of Ile, and oxidative cyclization. UstQ may catalyze the oxidation of a phenol moiety, whereas the ustYa and ustYb are most likely responsible for the remaining two-step oxidations. N-desmethylustiloxin F is then methylated by ustM to yield ustiloxin F which in turn substrate of the cytochrome P450 monooxygenase ustC which catalyzes the formation of S-deoxyustiloxin H. The flavoprotein monooxygenases ustF1 and ustF2 then participate in the modification of the side chain of S-deoxyustiloxin H, leading to the synthesis of an oxime intermediate, via ustiloxin H. Finally, carboxylative dehydration performed by the cysteine desulfurase-like protein ustD yields ustiloxin B. The protein is Pyridoxamine 5'-phosphate oxidase family protein ustO of Aspergillus flavus (strain ATCC 200026 / FGSC A1120 / IAM 13836 / NRRL 3357 / JCM 12722 / SRRC 167).